A 245-amino-acid polypeptide reads, in one-letter code: tRNA1(Val) (adenine(37)-N6)-methyltransferase (245 aa).

The protein belongs to the methyltransferase superfamily. tRNA (adenine-N(6)-)-methyltransferase family.

Its subcellular location is the cytoplasm. The catalysed reaction is adenosine(37) in tRNA1(Val) + S-adenosyl-L-methionine = N(6)-methyladenosine(37) in tRNA1(Val) + S-adenosyl-L-homocysteine + H(+). Specifically methylates the adenine in position 37 of tRNA(1)(Val) (anticodon cmo5UAC). The chain is tRNA1(Val) (adenine(37)-N6)-methyltransferase from Escherichia coli O6:K15:H31 (strain 536 / UPEC).